We begin with the raw amino-acid sequence, 606 residues long: Aspartate--tRNA(Asp/Asn) ligase (606 aa).

Glu177 serves as a coordination point for L-aspartate. The tract at residues 201-204 is aspartate; sequence QLFK. Position 223 (Arg223) interacts with L-aspartate. ATP contacts are provided by residues 223-225 and Gln232; that span reads RDE. His461 is a binding site for L-aspartate. Glu499 is an ATP binding site. Arg506 is a binding site for L-aspartate. An ATP-binding site is contributed by 551-554; that stretch reads GMDR.

The protein belongs to the class-II aminoacyl-tRNA synthetase family. Type 1 subfamily. As to quaternary structure, homodimer.

The protein localises to the cytoplasm. The enzyme catalyses tRNA(Asx) + L-aspartate + ATP = L-aspartyl-tRNA(Asx) + AMP + diphosphate. Functionally, aspartyl-tRNA synthetase with relaxed tRNA specificity since it is able to aspartylate not only its cognate tRNA(Asp) but also tRNA(Asn). Reaction proceeds in two steps: L-aspartate is first activated by ATP to form Asp-AMP and then transferred to the acceptor end of tRNA(Asp/Asn). This Prochlorococcus marinus (strain MIT 9313) protein is Aspartate--tRNA(Asp/Asn) ligase.